The primary structure comprises 367 residues: MGDFVFYYGLHNKISKYIKQTKKGCKLYLDDENYINVEMGTLFGQKYITVNFNDSLDFMKFIVKKKIYCDEYKHDYLKYILQNKHYDIIKFYCKKFIPLVKPNDSVFSFFNSLFVDIDLDDFKYIFKYSCLEDIKPHINYILYKADNINIEFMDDIISMYKSKLTKLFTSGKIFYLEISEIEINPCIFLVPALRKDDTNLFDFIMEEICNLTSEIDKTKLNKKRLKLLENFEVEFNSEFIWEIINYYILDDFGRGENRYGTYICPNIFRQLLSSIFDMDSLIDEGGVDDILMYDAVEYMGILCDFIGDTRPEFINKILVEARSTKMAQLLIDYGADYEALYESNEFRKCDSCVNKLVKKIIRETSDS.

Belongs to the mimivirus L17x/L18x family.

This is an uncharacterized protein from Acanthamoeba polyphaga mimivirus (APMV).